Here is a 387-residue protein sequence, read N- to C-terminus: Sedoheptulose-1,7-bisphosphatase, chloroplastic (387 aa).

Cys-109 and Cys-114 are disulfide-bonded. Positions 120, 149, 170, 172, and 173 each coordinate Mg(2+). Residues Asp-173–Ser-176, Tyr-284, and Lys-314 each bind substrate. Glu-320 serves as a coordination point for Mg(2+).

This sequence belongs to the FBPase class 1 family. In terms of assembly, homodimer. The cofactor is Mg(2+).

Its subcellular location is the plastid. The protein localises to the chloroplast. It catalyses the reaction D-sedoheptulose 1,7-bisphosphate + H2O = D-sedoheptulose 7-phosphate + phosphate. The protein operates within carbohydrate biosynthesis; Calvin cycle. This chain is Sedoheptulose-1,7-bisphosphatase, chloroplastic, found in Spinacia oleracea (Spinach).